The primary structure comprises 63 residues: Protein DsrB (63 aa).

Belongs to the DsrB family.

The chain is Protein DsrB from Yersinia enterocolitica serotype O:8 / biotype 1B (strain NCTC 13174 / 8081).